A 355-amino-acid polypeptide reads, in one-letter code: UDP-N-acetylglucosamine--N-acetylmuramyl-(pentapeptide) pyrophosphoryl-undecaprenol N-acetylglucosamine transferase (355 aa).

UDP-N-acetyl-alpha-D-glucosamine is bound by residues 15–17 (TGG), asparagine 127, arginine 163, serine 191, isoleucine 244, 263–268 (ALTVSE), and glutamine 288.

It belongs to the glycosyltransferase 28 family. MurG subfamily.

Its subcellular location is the cell inner membrane. The enzyme catalyses di-trans,octa-cis-undecaprenyl diphospho-N-acetyl-alpha-D-muramoyl-L-alanyl-D-glutamyl-meso-2,6-diaminopimeloyl-D-alanyl-D-alanine + UDP-N-acetyl-alpha-D-glucosamine = di-trans,octa-cis-undecaprenyl diphospho-[N-acetyl-alpha-D-glucosaminyl-(1-&gt;4)]-N-acetyl-alpha-D-muramoyl-L-alanyl-D-glutamyl-meso-2,6-diaminopimeloyl-D-alanyl-D-alanine + UDP + H(+). It participates in cell wall biogenesis; peptidoglycan biosynthesis. In terms of biological role, cell wall formation. Catalyzes the transfer of a GlcNAc subunit on undecaprenyl-pyrophosphoryl-MurNAc-pentapeptide (lipid intermediate I) to form undecaprenyl-pyrophosphoryl-MurNAc-(pentapeptide)GlcNAc (lipid intermediate II). This is UDP-N-acetylglucosamine--N-acetylmuramyl-(pentapeptide) pyrophosphoryl-undecaprenol N-acetylglucosamine transferase from Salmonella enteritidis PT4 (strain P125109).